The following is a 435-amino-acid chain: Cytochrome c biogenesis protein CcsB (435 aa).

Transmembrane regions (helical) follow at residues 11 to 31 (LRVA…GTAL), 69 to 89 (SDWF…CSWR), and 159 to 179 (VGPL…VWGV).

Belongs to the Ccs1/CcsB family. May interact with CcsA.

It is found in the plastid. Its subcellular location is the organellar chromatophore thylakoid membrane. Its function is as follows. Required during biogenesis of c-type cytochromes (cytochrome c6 and cytochrome f) at the step of heme attachment. The chain is Cytochrome c biogenesis protein CcsB from Paulinella chromatophora.